Reading from the N-terminus, the 7603-residue chain is Cysteine repeat modular protein B (7603 aa).

N-linked (GlcNAc...) asparagine glycosylation is present at Asn-172. A helical membrane pass occupies residues 223–243 (LVGFFLVPVFVVFFVLSSDAT). Disordered regions lie at residues 248–275 (GVGV…SSPG) and 291–323 (RDTK…GKGF). Residues 263 to 275 (SVSSSSRASSSPG) show a composition bias toward low complexity. A compositionally biased stretch (basic residues) spans 302-313 (SSRRSARARRRR). N-linked (GlcNAc...) asparagine glycans are attached at residues Asn-329, Asn-589, Asn-848, Asn-1128, Asn-1183, and Asn-1402. The interval 1554 to 1574 (VLRSRSGPSHPSSVSQPSPSF) is disordered. Residues 1557–1573 (SRSGPSHPSSVSQPSPS) show a composition bias toward low complexity. Asn-1622, Asn-2578, Asn-2664, Asn-3094, and Asn-3126 each carry an N-linked (GlcNAc...) asparagine glycan. The interval 3316–3445 (SNAVPEADEN…SDLTTSQPED (130 aa)) is disordered. Acidic residues predominate over residues 3321–3340 (EADENQVESAEPEQNAEGET). The span at 3342–3360 (EQGAEEAGGNAAEPGAESG) shows a compositional bias: low complexity. N-linked (GlcNAc...) asparagine glycans are attached at residues Asn-3546, Asn-4367, Asn-4823, Asn-4901, Asn-5186, Asn-5546, and Asn-5666. The tract at residues 5758–5799 (LAESRSDDGTVGDDVDLDDNALSGTTNSGWTTSSSNSERVRK) is disordered. The span at 5767–5776 (TVGDDVDLDD) shows a compositional bias: acidic residues. Residues 5780-5794 (SGTTNSGWTTSSSNS) show a composition bias toward low complexity. Asn-5806, Asn-5876, Asn-5998, Asn-6055, and Asn-6369 each carry an N-linked (GlcNAc...) asparagine glycan. Residues 6043 to 6115 (GEADHTPADG…EASEAESVSA (73 aa)) are disordered. Positions 6051 to 6060 (DGSSNSSEDS) are enriched in polar residues. A compositionally biased stretch (basic and acidic residues) spans 6391–6405 (EFTDTGPAPDDHTDE). The tract at residues 6391–6436 (EFTDTGPAPDDHTDEGGANLDSTGGSGEPSSSAPVDPSGENEGQLL) is disordered. Residues 6410 to 6423 (LDSTGGSGEPSSSA) are compositionally biased toward polar residues. The N-linked (GlcNAc...) asparagine glycan is linked to Asn-6453. A run of 8 helical transmembrane segments spans residues 6520–6540 (IFIL…ALTI), 6552–6572 (VLIR…LMPA), 6578–6598 (LAGW…ALHP), 6627–6647 (IFVP…CVAT), 6770–6790 (LILG…GFVA), 6831–6851 (CVAL…QEIF), 6888–6908 (GLMV…FEVF), and 6912–6932 (GAIP…SLFV). An N-linked (GlcNAc...) asparagine glycan is attached at Asn-7013. A helical membrane pass occupies residues 7017–7037 (FVAALSDSLSQLVIAWCQFTI). Asn-7061 is a glycosylation site (N-linked (GlcNAc...) asparagine). A coiled-coil region spans residues 7174–7242 (APQLRKENHA…RGLIESEIDD (69 aa)). The disordered stretch occupies residues 7379–7603 (AAPAAGLRSH…LKKPGSPKQE (225 aa)). Positions 7408–7417 (LGTNLSTPSA) are enriched in polar residues. Asn-7411 carries an N-linked (GlcNAc...) asparagine glycan. Composition is skewed to low complexity over residues 7474–7496 (PTPS…SVTP), 7509–7541 (SEAP…SSDL), and 7560–7582 (GEAA…AAQP).

In terms of assembly, component of a complex, at least composed of cysteine repeat modular protein A (CRMPa), cysteine repeat modular protein B (CRMPb), micronemal protein 15 (MIC15) and thrombospondin type 1 domain-containing protein (TSP1).

Its subcellular location is the cell membrane. The protein resides in the endoplasmic reticulum. It is found in the golgi apparatus. In terms of biological role, required for triggering rhoptry secretion. Plays a role in host cell invasion. This is Cysteine repeat modular protein B from Toxoplasma gondii.